A 557-amino-acid polypeptide reads, in one-letter code: Dihydroxy-acid dehydratase (557 aa).

Position 47 (Cys-47) interacts with [2Fe-2S] cluster. Asp-79 is a Mg(2+) binding site. Cys-120 provides a ligand contact to [2Fe-2S] cluster. The Mg(2+) site is built by Asp-121 and Lys-122. Position 122 is an N6-carboxylysine (Lys-122). Position 192 (Cys-192) interacts with [2Fe-2S] cluster. Glu-444 serves as a coordination point for Mg(2+). The active-site Proton acceptor is the Ser-470.

It belongs to the IlvD/Edd family. In terms of assembly, homodimer. The cofactor is [2Fe-2S] cluster. Mg(2+) is required as a cofactor.

The enzyme catalyses (2R)-2,3-dihydroxy-3-methylbutanoate = 3-methyl-2-oxobutanoate + H2O. The catalysed reaction is (2R,3R)-2,3-dihydroxy-3-methylpentanoate = (S)-3-methyl-2-oxopentanoate + H2O. It participates in amino-acid biosynthesis; L-isoleucine biosynthesis; L-isoleucine from 2-oxobutanoate: step 3/4. It functions in the pathway amino-acid biosynthesis; L-valine biosynthesis; L-valine from pyruvate: step 3/4. In terms of biological role, functions in the biosynthesis of branched-chain amino acids. Catalyzes the dehydration of (2R,3R)-2,3-dihydroxy-3-methylpentanoate (2,3-dihydroxy-3-methylvalerate) into 2-oxo-3-methylpentanoate (2-oxo-3-methylvalerate) and of (2R)-2,3-dihydroxy-3-methylbutanoate (2,3-dihydroxyisovalerate) into 2-oxo-3-methylbutanoate (2-oxoisovalerate), the penultimate precursor to L-isoleucine and L-valine, respectively. This Parasynechococcus marenigrum (strain WH8102) protein is Dihydroxy-acid dehydratase.